A 191-amino-acid chain; its full sequence is Cell division protein SepF (191 aa).

A compositionally biased stretch (low complexity) spans 150–164 (TSSSPEEASPSSVST). Positions 150–191 (TSSSPEEASPSSVSTENTPQYSLGKNTTPEPAWGNSKLSAYS) are disordered. The segment covering 165 to 178 (ENTPQYSLGKNTTP) has biased composition (polar residues).

The protein belongs to the SepF family. As to quaternary structure, homodimer. Interacts with FtsZ.

It localises to the cytoplasm. In terms of biological role, cell division protein that is part of the divisome complex and is recruited early to the Z-ring. Probably stimulates Z-ring formation, perhaps through the cross-linking of FtsZ protofilaments. Its function overlaps with FtsA. The polypeptide is Cell division protein SepF (Prochlorococcus marinus (strain AS9601)).